Consider the following 139-residue polypeptide: Large ribosomal subunit protein bL17 (139 aa).

Belongs to the bacterial ribosomal protein bL17 family. In terms of assembly, part of the 50S ribosomal subunit. Contacts protein L32.

The chain is Large ribosomal subunit protein bL17 from Myxococcus xanthus (strain DK1622).